Reading from the N-terminus, the 94-residue chain is MEARDIILKPLITEKSVAKMSEGKYAFKVRLDANKTQIKQAIEEIFGVTVVRVNTMRVRGKLRRQGKYIGRRSDWKKAIVQLKEGDSIKVFEGL.

The protein belongs to the universal ribosomal protein uL23 family. In terms of assembly, part of the 50S ribosomal subunit. Contacts protein L29, and trigger factor when it is bound to the ribosome.

Its function is as follows. One of the early assembly proteins it binds 23S rRNA. One of the proteins that surrounds the polypeptide exit tunnel on the outside of the ribosome. Forms the main docking site for trigger factor binding to the ribosome. This chain is Large ribosomal subunit protein uL23, found in Symbiobacterium thermophilum (strain DSM 24528 / JCM 14929 / IAM 14863 / T).